A 282-amino-acid chain; its full sequence is Bis(5'-nucleosyl)-tetraphosphatase, symmetrical (282 aa).

It belongs to the Ap4A hydrolase family.

The catalysed reaction is P(1),P(4)-bis(5'-adenosyl) tetraphosphate + H2O = 2 ADP + 2 H(+). Hydrolyzes diadenosine 5',5'''-P1,P4-tetraphosphate to yield ADP. This is Bis(5'-nucleosyl)-tetraphosphatase, symmetrical from Klebsiella pneumoniae (strain 342).